A 427-amino-acid polypeptide reads, in one-letter code: 3-phosphoshikimate 1-carboxyvinyltransferase (427 aa).

3-phosphoshikimate is bound by residues K22, S23, and R27. Position 22 (K22) interacts with phosphoenolpyruvate. Residues G96 and R124 each coordinate phosphoenolpyruvate. The 3-phosphoshikimate site is built by S169, S170, Q171, S197, D313, N336, and K340. Residue Q171 participates in phosphoenolpyruvate binding. Catalysis depends on D313, which acts as the Proton acceptor. Residues R344, R386, and K411 each coordinate phosphoenolpyruvate.

The protein belongs to the EPSP synthase family. In terms of assembly, monomer.

Its subcellular location is the cytoplasm. It carries out the reaction 3-phosphoshikimate + phosphoenolpyruvate = 5-O-(1-carboxyvinyl)-3-phosphoshikimate + phosphate. The protein operates within metabolic intermediate biosynthesis; chorismate biosynthesis; chorismate from D-erythrose 4-phosphate and phosphoenolpyruvate: step 6/7. In terms of biological role, catalyzes the transfer of the enolpyruvyl moiety of phosphoenolpyruvate (PEP) to the 5-hydroxyl of shikimate-3-phosphate (S3P) to produce enolpyruvyl shikimate-3-phosphate and inorganic phosphate. The protein is 3-phosphoshikimate 1-carboxyvinyltransferase of Escherichia coli O17:K52:H18 (strain UMN026 / ExPEC).